Consider the following 168-residue polypeptide: Photosystem I assembly protein Ycf3 (168 aa).

TPR repeat units follow at residues 35–68 (AFTYYRDGMSAQSEGNYAEALQNYYEAMRLEIDP), 72–105 (SYILYNIGLIHTSNGEHTKALEYYFRALERNPFL), and 120–153 (GEQAIRQGDSEIAEAWFDQAAEYWKQAMALTPGN).

The protein belongs to the Ycf3 family.

The protein resides in the plastid. Its subcellular location is the chloroplast thylakoid membrane. In terms of biological role, essential for the assembly of the photosystem I (PSI) complex. May act as a chaperone-like factor to guide the assembly of the PSI subunits. In Panax ginseng (Korean ginseng), this protein is Photosystem I assembly protein Ycf3.